The following is a 484-amino-acid chain: GRIP domain-containing protein RUD3 (484 aa).

Over residues 1-15 (MGKNKKKTGKKAKSH) the composition is skewed to basic residues. The disordered stretch occupies residues 1–75 (MGKNKKKTGK…GVDKQKVNDG (75 aa)). Basic and acidic residues predominate over residues 16–30 (PHVEDVDETVNKPEE). 2 positions are modified to phosphoserine: S55 and S64. A compositionally biased stretch (basic and acidic residues) spans 61–72 (KDLSEGVDKQKV). A coiled-coil region spans residues 84-383 (LEDKKAGDEM…LQIGKLRHEA (300 aa)). A GRIP domain is found at 401–452 (SDSESVDKELISNLLISFVSIPRADPRKFEVLELLSNFLNWDEDKKQQAGLI). S468 carries the post-translational modification Phosphoserine.

Its subcellular location is the golgi apparatus lumen. Involved in the structural organization of the cis-Golgi and in vesicle targeting/fusion stages of ER to Golgi transport. The protein is GRIP domain-containing protein RUD3 (RUD3) of Saccharomyces cerevisiae (strain ATCC 204508 / S288c) (Baker's yeast).